A 148-amino-acid chain; its full sequence is Small ribosomal subunit protein uS13 (148 aa).

The protein belongs to the universal ribosomal protein uS13 family. As to quaternary structure, part of the 30S ribosomal subunit. Forms a loose heterodimer with protein S19. Forms two bridges to the 50S subunit in the 70S ribosome.

Its function is as follows. Located at the top of the head of the 30S subunit, it contacts several helices of the 16S rRNA. In the 70S ribosome it contacts the 23S rRNA (bridge B1a) and protein L5 of the 50S subunit (bridge B1b), connecting the 2 subunits; these bridges are implicated in subunit movement. This chain is Small ribosomal subunit protein uS13, found in Pyrococcus abyssi (strain GE5 / Orsay).